A 339-amino-acid chain; its full sequence is Ornithine carbamoyltransferase (339 aa).

Carbamoyl phosphate contacts are provided by residues 56 to 59, Arg107, and 134 to 137; these read STRT and HPTQ. Residues Asn168, Asp232, and 236 to 237 contribute to the L-ornithine site; that span reads SM. Residues 274–275 and Arg320 each bind carbamoyl phosphate; that span reads CL.

This sequence belongs to the aspartate/ornithine carbamoyltransferase superfamily. OTCase family.

It is found in the cytoplasm. The catalysed reaction is carbamoyl phosphate + L-ornithine = L-citrulline + phosphate + H(+). Its pathway is amino-acid biosynthesis; L-arginine biosynthesis; L-arginine from L-ornithine and carbamoyl phosphate: step 1/3. Reversibly catalyzes the transfer of the carbamoyl group from carbamoyl phosphate (CP) to the N(epsilon) atom of ornithine (ORN) to produce L-citrulline. This is Ornithine carbamoyltransferase from Buchnera aphidicola subsp. Baizongia pistaciae (strain Bp).